Consider the following 86-residue polypeptide: MVIWKVVNKAPLALIKFYRAILSPMFPPSCRFYPTCSAYALEAFETHNFFKASWLSLWRILRCNPFSKGGFDPVPPHDGVPGKKED.

Residues 66 to 86 form a disordered region; it reads FSKGGFDPVPPHDGVPGKKED.

This sequence belongs to the UPF0161 family.

It localises to the cell inner membrane. In terms of biological role, could be involved in insertion of integral membrane proteins into the membrane. The polypeptide is Putative membrane protein insertion efficiency factor (Chlorobium luteolum (strain DSM 273 / BCRC 81028 / 2530) (Pelodictyon luteolum)).